Here is a 368-residue protein sequence, read N- to C-terminus: Mitogen-activated protein kinase KSS1 (368 aa).

The Protein kinase domain maps to 13–313; that stretch reads YKLVDLIGEG…AAEALRHPYL (301 aa). Residues 19–27 and K42 each bind ATP; that span reads IGEGAYGTV. Catalysis depends on D143, which acts as the Proton acceptor. At T183 the chain carries Phosphothreonine. Residues 183 to 185 carry the TXY motif; that stretch reads TEY. Y185 carries the post-translational modification Phosphotyrosine.

Belongs to the protein kinase superfamily. Ser/Thr protein kinase family. MAP kinase subfamily. HOG1 sub-subfamily. As to quaternary structure, in the nucleus, KSS1 forms a complex with DIG1, DIG2 and STE12; in contrast to FUS3 the interaction of KSS1 with STE12 does not depend on DIG1 and DIG2. Phosphorylated KSS1 shows reduced interaction with STE12. During pheromone activation and phosphorylation, KSS1 forms a membrane-associated complex with the scaffold protein STE5, the MAPKK STE7, the MAPKKK STE11, and the G-protein beta subunit GBB/STE4; interacting directly with POF1, STE7 and STE5 proteins. Mg(2+) serves as cofactor. In terms of processing, dually phosphorylated on Thr-183 and Tyr-185 by STE7 in response to pheromone or carbon/nitrogen limitation, which activates the enzyme. Activated FUS3 down-regulates KSS1 phosphorylation.

Its subcellular location is the nucleus. It localises to the cytoplasm. The protein localises to the periplasm. The catalysed reaction is L-seryl-[protein] + ATP = O-phospho-L-seryl-[protein] + ADP + H(+). The enzyme catalyses L-threonyl-[protein] + ATP = O-phospho-L-threonyl-[protein] + ADP + H(+). With respect to regulation, activated by tyrosine and threonine phosphorylation after pheromone treatment or carbon/nitrogen limitation. In terms of biological role, together with closely related FUS3, KSS1 is the final kinase in the signal transduction cascade regulating activation/repression of the mating and filamentation pathways, induced by pheromone and nitrogen/carbon limitation, respectively. Phosphorylated KSS1 activates both pathways, whereas activated FUS3 activates the mating but suppresses the filamentation pathway. KSS1 activity is down-regulated by FUS3 during pheromone induction to prevent inappropriate activation of the filamentation pathway. During induction of filamentation, KSS1 activates the transcription factor STE12 resulting in its binding to and activation of filamentation specific genes. Non-activated KSS1 has a kinase-independent repressive effect on STE12 transcriptional activity, that is mediated by direct binding to STE12 and depends on the presence of DIG1 and DIG2, and that is required for the suppression of filamentation under normal growth conditions. SSN3/SRB10 contributes further to the suppression of filamentation under these conditions by reducing STE12 stability independent of KSS1. FUS3 can partially compensate for the lack of KSS1 but filamentation becomes constitutively induced at a low level in the absence of any signal. KSS1 phosphorylates STE7, STE5, FAR1, DIG1, DIG2, STE12, and SST2. The sequence is that of Mitogen-activated protein kinase KSS1 (KSS1) from Saccharomyces cerevisiae (strain ATCC 204508 / S288c) (Baker's yeast).